The following is a 502-amino-acid chain: Maturase K (502 aa).

This sequence belongs to the intron maturase 2 family. MatK subfamily.

The protein localises to the plastid. It is found in the chloroplast. In terms of biological role, usually encoded in the trnK tRNA gene intron. Probably assists in splicing its own and other chloroplast group II introns. This chain is Maturase K, found in Tilia americana (American basswood).